A 462-amino-acid polypeptide reads, in one-letter code: Argininosuccinate lyase (462 aa).

The protein belongs to the lyase 1 family. Argininosuccinate lyase subfamily.

The protein localises to the cytoplasm. The enzyme catalyses 2-(N(omega)-L-arginino)succinate = fumarate + L-arginine. It participates in amino-acid biosynthesis; L-arginine biosynthesis; L-arginine from L-ornithine and carbamoyl phosphate: step 3/3. The chain is Argininosuccinate lyase from Ehrlichia ruminantium (strain Welgevonden).